Consider the following 202-residue polypeptide: Transmembrane gamma-carboxyglutamic acid protein 2 (202 aa).

A signal peptide spans 1 to 23; that stretch reads MRGHPSLLLLYMALTTCLDTSPS. Residues 24-49 constitute a propeptide that is removed on maturation; that stretch reads EETDQEVFLGPPEAQSFLSSHTRIPR. Residues 50–96 enclose the Gla domain; it reads ANHWDLELLTPGNLERECLEERCSWEEAREYFEDNTLTERFWESYIY. Topologically, residues 50 to 109 are extracellular; the sequence is ANHWDLELLTPGNLERECLEERCSWEEAREYFEDNTLTERFWESYIYNGKGGRGRVDVAS. Cysteine 67 and cysteine 72 are oxidised to a cystine. Position 70 is a 4-carboxyglutamate (glutamate 70). Residues 110–130 traverse the membrane as a helical segment; the sequence is LAVGLTGGILLIVLAGLGAFW. Topologically, residues 131-202 are cytoplasmic; sequence YLRWRQHRGQ…PPYTSLRRPH (72 aa). Positions 143-202 are disordered; sequence CPQEAGLISPLSPLNPLGPPTPLPPPPPPPPGLPTYEQALAASGVHDAPPPPYTSLRRPH. Residues 158–175 show a composition bias toward pro residues; the sequence is PLGPPTPLPPPPPPPPGL. An LPXY motif; mediates binding to WW domain-containing proteins motif is present at residues 175-178; that stretch reads LPTY. The PPXY motif; mediates binding to WW domain-containing proteins signature appears at 192–195; that stretch reads PPPY.

As to quaternary structure, interacts with NEDD4. Interacts (via cytoplasmic domain) with transcriptional coactivator YAP1. Post-translationally, gamma-carboxyglutamate residues are formed by vitamin K dependent carboxylation. These residues are essential for the binding of calcium. In terms of tissue distribution, widely expressed with highest levels in kidney. Also highly expressed in the thyroid.

The protein localises to the cell membrane. This chain is Transmembrane gamma-carboxyglutamic acid protein 2, found in Homo sapiens (Human).